A 226-amino-acid chain; its full sequence is PKHD-type hydroxylase LHK_00496 (226 aa).

Residues Arg-78–Ser-178 enclose the Fe2OG dioxygenase domain. Fe cation is bound by residues His-96, Asp-98, and His-159. Arg-169 contacts 2-oxoglutarate.

Fe(2+) serves as cofactor. L-ascorbate is required as a cofactor.

The protein is PKHD-type hydroxylase LHK_00496 of Laribacter hongkongensis (strain HLHK9).